A 199-amino-acid chain; its full sequence is 7-methyl-GTP pyrophosphatase (199 aa).

Asp74 acts as the Proton acceptor in catalysis.

Belongs to the Maf family. YceF subfamily. Requires a divalent metal cation as cofactor.

Its subcellular location is the cytoplasm. The enzyme catalyses N(7)-methyl-GTP + H2O = N(7)-methyl-GMP + diphosphate + H(+). In terms of biological role, nucleoside triphosphate pyrophosphatase that hydrolyzes 7-methyl-GTP (m(7)GTP). May have a dual role in cell division arrest and in preventing the incorporation of modified nucleotides into cellular nucleic acids. The chain is 7-methyl-GTP pyrophosphatase from Albidiferax ferrireducens (strain ATCC BAA-621 / DSM 15236 / T118) (Rhodoferax ferrireducens).